A 201-amino-acid polypeptide reads, in one-letter code: Dephospho-CoA kinase (201 aa).

One can recognise a DPCK domain in the interval Leu10–Arg201. Ala18 to Thr23 provides a ligand contact to ATP.

Belongs to the CoaE family.

The protein localises to the cytoplasm. It carries out the reaction 3'-dephospho-CoA + ATP = ADP + CoA + H(+). The protein operates within cofactor biosynthesis; coenzyme A biosynthesis; CoA from (R)-pantothenate: step 5/5. Catalyzes the phosphorylation of the 3'-hydroxyl group of dephosphocoenzyme A to form coenzyme A. The chain is Dephospho-CoA kinase from Synechocystis sp. (strain ATCC 27184 / PCC 6803 / Kazusa).